Consider the following 265-residue polypeptide: UPF0354 protein GWCH70_2742 (265 aa).

Belongs to the UPF0354 family.

This is UPF0354 protein GWCH70_2742 from Geobacillus sp. (strain WCH70).